The primary structure comprises 168 residues: Nicotinamide-nucleotide adenylyltransferase (168 aa).

ATP-binding residues include R8, F9, H13, H16, F119, R121, Y124, G126, T127, and R130.

This sequence belongs to the archaeal NMN adenylyltransferase family. As to quaternary structure, homohexamer existing as a trimer of dimers.

It localises to the cytoplasm. It carries out the reaction beta-nicotinamide D-ribonucleotide + ATP + H(+) = diphosphate + NAD(+). It participates in cofactor biosynthesis; NAD(+) biosynthesis; NAD(+) from nicotinamide D-ribonucleotide: step 1/1. Its function is as follows. Catalyzes the formation of NAD(+) from nicotinamide mononucleotide (NMN) and ATP. The protein is Nicotinamide-nucleotide adenylyltransferase of Methanocaldococcus jannaschii (strain ATCC 43067 / DSM 2661 / JAL-1 / JCM 10045 / NBRC 100440) (Methanococcus jannaschii).